Consider the following 1109-residue polypeptide: DNA mismatch repair protein MSH7 (1109 aa).

Disordered stretches follow at residues 19–45 (TKGLVSGDAASGGGGSGGPRFNVKEGD) and 61–86 (DEVRGTDTPPEKVPRRVLPSGFKPAE). The span at 61–74 (DEVRGTDTPPEKVP) shows a compositional bias: basic and acidic residues. ATP is bound at residue 853–860 (GPNMGGKS).

This sequence belongs to the DNA mismatch repair MutS family. In terms of assembly, heterodimer consisting of MSH2-MSH7 (MutS gamma).

The protein resides in the nucleus. In terms of biological role, component of the post-replicative DNA mismatch repair system (MMR). Forms the heterodimer MutS gamma (MSH2-MSH7 heterodimer) which binds to DNA mismatches thereby initiating DNA repair. MutS gamma recognizes specifically the T/G single base mismatch, but not trinucleotide insertion-deletion loops (IDL). This is DNA mismatch repair protein MSH7 (MSH7) from Arabidopsis thaliana (Mouse-ear cress).